Reading from the N-terminus, the 299-residue chain is Protein PRY1 (299 aa).

The N-terminal stretch at 1 to 19 (MKLSKLSILTSALATSALA) is a signal peptide. Residues 103–157 (TDSTTTLTSSESTSQSLAQATTTSTPAAASTTSTPAATTTTSQAAATSSASSSDS) are disordered. The SCP domain occupies 167–281 (LAEHNKKRAL…AWGDYVICSY (115 aa)).

It belongs to the CRISP family. Post-translationally, O-glycosylated.

It is found in the secreted. In terms of biological role, secreted protein required for efficient export of lipids such as acetylated sterols. Acts in detoxification of hydrophobic compounds. The protein is Protein PRY1 of Saccharomyces cerevisiae (strain ATCC 204508 / S288c) (Baker's yeast).